The sequence spans 107 residues: Replication initiation control protein YabA (107 aa).

Positions 81, 83, 97, and 100 each coordinate Zn(2+).

It belongs to the YabA family. As to quaternary structure, homotetramer. Interacts with both DnaA and DnaN, acting as a bridge between these two proteins. It depends on Zn(2+) as a cofactor.

The protein localises to the cytoplasm. It is found in the nucleoid. Involved in control of chromosome replication initiation. Inhibits the cooperative binding of DnaA to the oriC region, thus negatively regulating initiation of chromosome replication. Inhibits the ability of DnaA-ATP to form a helix on DNA; does not disassemble preformed DnaA-DNA helices. Decreases the residence time of DnaA on the chromosome at its binding sites (oriC, replication forks and promoter-binding sites). Tethers DnaA to the replication machinery via the DNA polymerase beta sliding clamp subunit (dnaN). Associates with oriC and other DnaA targets on the chromosome in a DnaA-dependent manner. The protein is Replication initiation control protein YabA of Streptococcus pyogenes serotype M1.